We begin with the raw amino-acid sequence, 588 residues long: Sulfite reductase [NADPH] hemoprotein beta-component (588 aa).

Positions 442, 448, 487, and 491 each coordinate [4Fe-4S] cluster. Residue Cys491 participates in siroheme binding.

The protein belongs to the nitrite and sulfite reductase 4Fe-4S domain family. Alpha(8)-beta(8). The alpha component is a flavoprotein, the beta component is a hemoprotein. It depends on siroheme as a cofactor. Requires [4Fe-4S] cluster as cofactor.

The enzyme catalyses hydrogen sulfide + 3 NADP(+) + 3 H2O = sulfite + 3 NADPH + 4 H(+). Its pathway is sulfur metabolism; hydrogen sulfide biosynthesis; hydrogen sulfide from sulfite (NADPH route): step 1/1. In terms of biological role, component of the sulfite reductase complex that catalyzes the 6-electron reduction of sulfite to sulfide. This is one of several activities required for the biosynthesis of L-cysteine from sulfate. The sequence is that of Sulfite reductase [NADPH] hemoprotein beta-component from Actinobacillus pleuropneumoniae serotype 3 (strain JL03).